A 353-amino-acid polypeptide reads, in one-letter code: Photosystem II D2 protein (353 aa).

Position 2 is an N-acetylthreonine (Thr-2). Thr-2 carries the phosphothreonine modification. The chain crosses the membrane as a helical span at residues 41–61 (CAYFALGGWLTGTTFVTSWYT). A chlorophyll a-binding site is contributed by His-118. A helical transmembrane segment spans residues 125–141 (GFMLRQFEIARSVGLRP). Residues Gln-130 and Asn-143 each contribute to the pheophytin a site. The helical transmembrane segment at 153–166 (VFVSVFLIYPLGQS) threads the bilayer. His-198 provides a ligand contact to chlorophyll a. Residues 208 to 228 (AALLCAIHGATVENTIFEDGD) form a helical membrane-spanning segment. Residues His-215 and Phe-262 each contribute to the a plastoquinone site. Residue His-215 participates in Fe cation binding. His-269 lines the Fe cation pocket. Residues 279-295 (GLWMSAIGVVGLALNLR) traverse the membrane as a helical segment.

The protein belongs to the reaction center PufL/M/PsbA/D family. PSII is composed of 1 copy each of membrane proteins PsbA, PsbB, PsbC, PsbD, PsbE, PsbF, PsbH, PsbI, PsbJ, PsbK, PsbL, PsbM, PsbT, PsbX, PsbY, PsbZ, Psb30/Ycf12, at least 3 peripheral proteins of the oxygen-evolving complex and a large number of cofactors. It forms dimeric complexes. The D1/D2 heterodimer binds P680, chlorophylls that are the primary electron donor of PSII, and subsequent electron acceptors. It shares a non-heme iron and each subunit binds pheophytin, quinone, additional chlorophylls, carotenoids and lipids. There is also a Cl(-1) ion associated with D1 and D2, which is required for oxygen evolution. The PSII complex binds additional chlorophylls, carotenoids and specific lipids. is required as a cofactor.

Its subcellular location is the plastid. It localises to the chloroplast thylakoid membrane. It carries out the reaction 2 a plastoquinone + 4 hnu + 2 H2O = 2 a plastoquinol + O2. Photosystem II (PSII) is a light-driven water:plastoquinone oxidoreductase that uses light energy to abstract electrons from H(2)O, generating O(2) and a proton gradient subsequently used for ATP formation. It consists of a core antenna complex that captures photons, and an electron transfer chain that converts photonic excitation into a charge separation. The D1/D2 (PsbA/PsbD) reaction center heterodimer binds P680, the primary electron donor of PSII as well as several subsequent electron acceptors. D2 is needed for assembly of a stable PSII complex. The polypeptide is Photosystem II D2 protein (Staurastrum punctulatum (Green alga)).